The following is a 495-amino-acid chain: Membrane-bound lytic murein transglycosylase F (495 aa).

Residues 1–30 form the signal peptide; sequence MSRIRHHRFIQSCLVISTLLITLTGCQVES. Residues 31–270 form a non-LT domain region; sequence EPKTKLEQIR…LLEEKYFGHV (240 aa). Positions 272–495 are LT domain; the sequence is SFDYVDTRAF…SVSQAIETKK (224 aa). The active site involves Glu315.

It in the N-terminal section; belongs to the bacterial solute-binding protein 3 family. The protein in the C-terminal section; belongs to the transglycosylase Slt family.

It localises to the cell outer membrane. It carries out the reaction Exolytic cleavage of the (1-&gt;4)-beta-glycosidic linkage between N-acetylmuramic acid (MurNAc) and N-acetylglucosamine (GlcNAc) residues in peptidoglycan, from either the reducing or the non-reducing ends of the peptidoglycan chains, with concomitant formation of a 1,6-anhydrobond in the MurNAc residue.. Its function is as follows. Murein-degrading enzyme that degrades murein glycan strands and insoluble, high-molecular weight murein sacculi, with the concomitant formation of a 1,6-anhydromuramoyl product. Lytic transglycosylases (LTs) play an integral role in the metabolism of the peptidoglycan (PG) sacculus. Their lytic action creates space within the PG sacculus to allow for its expansion as well as for the insertion of various structures such as secretion systems and flagella. The protein is Membrane-bound lytic murein transglycosylase F of Aliivibrio fischeri (strain ATCC 700601 / ES114) (Vibrio fischeri).